The chain runs to 102 residues: Large ribosomal subunit protein uL23 (102 aa).

Belongs to the universal ribosomal protein uL23 family. As to quaternary structure, part of the 50S ribosomal subunit. Contacts protein L29, and trigger factor when it is bound to the ribosome.

Its function is as follows. One of the early assembly proteins it binds 23S rRNA. One of the proteins that surrounds the polypeptide exit tunnel on the outside of the ribosome. Forms the main docking site for trigger factor binding to the ribosome. The sequence is that of Large ribosomal subunit protein uL23 from Methylobacillus flagellatus (strain ATCC 51484 / DSM 6875 / VKM B-1610 / KT).